The primary structure comprises 312 residues: tRNA dimethylallyltransferase (312 aa).

Residue 17-24 (GPTASGKS) coordinates ATP. Residue 19-24 (TASGKS) participates in substrate binding.

Belongs to the IPP transferase family. In terms of assembly, monomer. Mg(2+) serves as cofactor.

The enzyme catalyses adenosine(37) in tRNA + dimethylallyl diphosphate = N(6)-dimethylallyladenosine(37) in tRNA + diphosphate. Its function is as follows. Catalyzes the transfer of a dimethylallyl group onto the adenine at position 37 in tRNAs that read codons beginning with uridine, leading to the formation of N6-(dimethylallyl)adenosine (i(6)A). This Zymomonas mobilis subsp. mobilis (strain ATCC 31821 / ZM4 / CP4) protein is tRNA dimethylallyltransferase.